A 24-amino-acid polypeptide reads, in one-letter code: Defensin D6 (24 aa).

Belongs to the DEFL family. Group IV subfamily. In terms of tissue distribution, distributed in the epidermal cell layer of leaves and in the subepidermal layer region of stems. Not in roots.

It is found in the secreted. The protein resides in the cell wall. Functionally, antimicrobial peptide. Active against Fusarium spp., Gram-positive and Gram-negative bacterial pathogens. In Spinacia oleracea (Spinach), this protein is Defensin D6.